The primary structure comprises 338 residues: tRNA N6-adenosine threonylcarbamoyltransferase (338 aa).

Fe cation is bound by residues His-110, His-114, and Tyr-131. Substrate contacts are provided by residues 131-135, Asp-163, Asp-184, and Asn-268; that span reads YVSGG. Asp-296 contacts Fe cation.

It belongs to the KAE1 / TsaD family. The cofactor is Fe(2+).

It is found in the cytoplasm. The catalysed reaction is L-threonylcarbamoyladenylate + adenosine(37) in tRNA = N(6)-L-threonylcarbamoyladenosine(37) in tRNA + AMP + H(+). In terms of biological role, required for the formation of a threonylcarbamoyl group on adenosine at position 37 (t(6)A37) in tRNAs that read codons beginning with adenine. Is probably involved in the transfer of the threonylcarbamoyl moiety of threonylcarbamoyl-AMP (TC-AMP) to the N6 group of A37. This is tRNA N6-adenosine threonylcarbamoyltransferase from Staphylothermus marinus (strain ATCC 43588 / DSM 3639 / JCM 9404 / F1).